The following is a 779-amino-acid chain: Endonuclease MutS2 (779 aa).

328 to 335 (GPNTGGKT) serves as a coordination point for ATP. Positions 704 to 779 (LDLRGKRYEE…GSGATIVTLG (76 aa)) constitute a Smr domain.

It belongs to the DNA mismatch repair MutS family. MutS2 subfamily. As to quaternary structure, homodimer. Binds to stalled ribosomes, contacting rRNA.

In terms of biological role, endonuclease that is involved in the suppression of homologous recombination and thus may have a key role in the control of bacterial genetic diversity. Its function is as follows. Acts as a ribosome collision sensor, splitting the ribosome into its 2 subunits. Detects stalled/collided 70S ribosomes which it binds and splits by an ATP-hydrolysis driven conformational change. Acts upstream of the ribosome quality control system (RQC), a ribosome-associated complex that mediates the extraction of incompletely synthesized nascent chains from stalled ribosomes and their subsequent degradation. Probably generates substrates for RQC. The chain is Endonuclease MutS2 from Streptococcus pyogenes serotype M49 (strain NZ131).